Consider the following 166-residue polypeptide: Ribosome maturation factor RimM (166 aa).

Residues 94 to 166 enclose the PRC barrel domain; that stretch reads EGEYYHADLI…IVIEAAYADQ (73 aa).

Belongs to the RimM family. Binds ribosomal protein uS19.

The protein resides in the cytoplasm. Its function is as follows. An accessory protein needed during the final step in the assembly of 30S ribosomal subunit, possibly for assembly of the head region. Essential for efficient processing of 16S rRNA. May be needed both before and after RbfA during the maturation of 16S rRNA. It has affinity for free ribosomal 30S subunits but not for 70S ribosomes. The sequence is that of Ribosome maturation factor RimM from Novosphingobium aromaticivorans (strain ATCC 700278 / DSM 12444 / CCUG 56034 / CIP 105152 / NBRC 16084 / F199).